The primary structure comprises 134 residues: Profilin-1 (134 aa).

Cysteines 13 and 118 form a disulfide. The short motif at 84-100 (AVIRGKKGSGGITTKKT) is the Involved in PIP2 interaction element. The residue at position 114 (T114) is a Phosphothreonine.

It belongs to the profilin family. As to quaternary structure, occurs in many kinds of cells as a complex with monomeric actin in a 1:1 ratio. Post-translationally, phosphorylated by MAP kinases.

It localises to the cytoplasm. The protein localises to the cytoskeleton. Functionally, binds to actin and affects the structure of the cytoskeleton. At high concentrations, profilin prevents the polymerization of actin, whereas it enhances it at low concentrations. The protein is Profilin-1 of Olea europaea (Common olive).